Reading from the N-terminus, the 933-residue chain is Dual 3',5'-cyclic-AMP and -GMP phosphodiesterase 11A (933 aa).

The segment at His-42–Phe-125 is disordered. Residues Ser-162, Ser-163, and Ser-239 each carry the phosphoserine modification. GAF domains follow at residues Asp-217–Ile-370 and Asp-402–Ile-558. Residue Ser-424 participates in 3',5'-cyclic GMP binding. The region spanning Ser-588–Arg-912 is the PDEase domain. The Proton donor role is filled by His-664. The a divalent metal cation site is built by His-668, His-704, Asp-705, and Asp-816.

Belongs to the cyclic nucleotide phosphodiesterase family. A divalent metal cation is required as a cofactor. In terms of tissue distribution, isoform 1 is present in prostate, pituitary, heart and liver. It is however not present in testis nor in penis, suggesting that weak inhibition by Tadalafil (Cialis) is not relevant (at protein level). Isoform 2 may be expressed in testis. Isoform 4 is expressed in adrenal cortex.

It is found in the cytoplasm. Its subcellular location is the cytosol. The catalysed reaction is 3',5'-cyclic GMP + H2O = GMP + H(+). The enzyme catalyses 3',5'-cyclic AMP + H2O = AMP + H(+). With respect to regulation, inhibited by 3-isobutyl-1-methylxanthine (IBMX), zaprinast and dipyridamole. cGMP acts as an allosteric activator. Weakly inhibited by Sildenafil (Viagra) and Tadalafil (Cialis); however, the fact that the protein is probably absent from testis, suggests that it is not biologically relevant and is not related with erectile dysfunction. Its function is as follows. Plays a role in signal transduction by regulating the intracellular concentration of cyclic nucleotides cAMP and cGMP. Catalyzes the hydrolysis of both cAMP and cGMP to 5'-AMP and 5'-GMP, respectively. This chain is Dual 3',5'-cyclic-AMP and -GMP phosphodiesterase 11A, found in Homo sapiens (Human).